A 424-amino-acid polypeptide reads, in one-letter code: Type II methyltransferase M.BspRI (424 aa).

Residues 58 to 408 (FNVLSLFCGA…KSIAQFAADY (351 aa)) enclose the SAM-dependent MTase C5-type domain. C156 serves as the catalytic S-methylcysteine intermediate. S-methylcysteine; by autocatalysis is present on C181.

The protein belongs to the class I-like SAM-binding methyltransferase superfamily. C5-methyltransferase family. Monomer. In terms of processing, in the absence of DNA, can self-methylate two cysteine residues.

It carries out the reaction a 2'-deoxycytidine in DNA + S-adenosyl-L-methionine = a 5-methyl-2'-deoxycytidine in DNA + S-adenosyl-L-homocysteine + H(+). Functionally, a methylase, recognizes the double-stranded sequence 5'-GGCC-3', methylates C-3 on both strands, and protects the DNA from cleavage by the BspRI endonuclease. The sequence is that of Type II methyltransferase M.BspRI (bspRIM) from Lysinibacillus sphaericus (Bacillus sphaericus).